We begin with the raw amino-acid sequence, 217 residues long: 3-oxo-tetronate 4-phosphate decarboxylase (217 aa).

Zn(2+)-binding residues include H93 and H95. Y120 functions as the Proton donor in the catalytic mechanism.

Belongs to the aldolase class II family. AraD/FucA subfamily. Zn(2+) is required as a cofactor.

It carries out the reaction 3-dehydro-4-O-phospho-D-erythronate + H(+) = dihydroxyacetone phosphate + CO2. The catalysed reaction is 3-dehydro-4-O-phospho-L-erythronate + H(+) = dihydroxyacetone phosphate + CO2. Catalyzes the decarboxylation of 3-oxo-tetronate 4-phosphate to dihydroxyacetone phosphate (DHAP) and CO(2). In Cupriavidus necator (strain ATCC 17699 / DSM 428 / KCTC 22496 / NCIMB 10442 / H16 / Stanier 337) (Ralstonia eutropha), this protein is 3-oxo-tetronate 4-phosphate decarboxylase.